Reading from the N-terminus, the 429-residue chain is MPQYQAVKGTRDIFPEEAARWKYVEGVVHAIASLYGFSEIRTPVFEYTELFQRGIGSTTDIVGKEMFSFLPDPKGRSLTLRPEMTAGVMRAALQNNLLSSAPVQKLYYIGELFRKERPQAGRQRQFSQFGAELLGVSSPAAVAEVITLMMQLFASLGLRSLKLRINSLGDTEDRLRYREALQLYFTPFHELLDDASKERLEKNPLRILDTKNPALQELVAGAPRLYDYLKDASLQDFEKVLFYLEERDIAYEIDYRLVRGLDYYCNTAFEVTSSELGAQDAIGGGGRYDGLARELGSSVDVPASGFAVGMERLLITMEKQGLFATLAPQGPLVYVIVQQQDLADNALQIVWRLRKAGIKTEVDLAARSMKAQMREANKIKAAYALFIGTTEETTGLYALKNLETSEQITLTLEAVLELLREQAVGEQLD.

This sequence belongs to the class-II aminoacyl-tRNA synthetase family. Homodimer.

Its subcellular location is the cytoplasm. The enzyme catalyses tRNA(His) + L-histidine + ATP = L-histidyl-tRNA(His) + AMP + diphosphate + H(+). The protein is Histidine--tRNA ligase of Pelodictyon phaeoclathratiforme (strain DSM 5477 / BU-1).